A 347-amino-acid polypeptide reads, in one-letter code: Protein RecA (347 aa).

Residue 67-74 (GPESSGKT) coordinates ATP.

This sequence belongs to the RecA family.

The protein resides in the cytoplasm. Can catalyze the hydrolysis of ATP in the presence of single-stranded DNA, the ATP-dependent uptake of single-stranded DNA by duplex DNA, and the ATP-dependent hybridization of homologous single-stranded DNAs. It interacts with LexA causing its activation and leading to its autocatalytic cleavage. The chain is Protein RecA from Helicobacter pylori (strain G27).